The primary structure comprises 162 residues: UPF0114 protein PSEEN0819 (162 aa).

3 consecutive transmembrane segments (helical) span residues 15–35 (LLAPIYFGLSLGLLALALKFF), 53–73 (LVLVILSLIDMSLVGGLLVMV), and 136–156 (LMWYVIIHMTFVVSAFVMGYL).

This sequence belongs to the UPF0114 family.

The protein resides in the cell membrane. The protein is UPF0114 protein PSEEN0819 of Pseudomonas entomophila (strain L48).